The chain runs to 113 residues: Insulin (113 aa).

The first 24 residues, 1 to 24 (MAALWLQAFSLLVLMMVSWPGSQA), serve as a signal peptide directing secretion. Disulfide bonds link Cys-32–Cys-99, Cys-44–Cys-112, and Cys-98–Cys-103. Residues 56-90 (DVDPLLGFLPPKAGGAVVQGGENEVTFKDQMEMMV) constitute a propeptide, c peptide.

Belongs to the insulin family. Heterodimer of a B chain and an A chain linked by two disulfide bonds.

The protein localises to the secreted. Functionally, insulin decreases blood glucose concentration. It increases cell permeability to monosaccharides, amino acids and fatty acids. It accelerates glycolysis, the pentose phosphate cycle, and glycogen synthesis in liver. This chain is Insulin (ins), found in Oreochromis niloticus (Nile tilapia).